Here is a 369-residue protein sequence, read N- to C-terminus: DNA replication and repair protein RecF (369 aa).

30–37 (GDNAQGKT) contributes to the ATP binding site.

It belongs to the RecF family.

The protein localises to the cytoplasm. The RecF protein is involved in DNA metabolism; it is required for DNA replication and normal SOS inducibility. RecF binds preferentially to single-stranded, linear DNA. It also seems to bind ATP. This chain is DNA replication and repair protein RecF, found in Streptococcus equi subsp. zooepidemicus (strain MGCS10565).